The chain runs to 419 residues: S-adenosylmethionine synthase (419 aa).

Position 15 (H15) interacts with ATP. D17 contributes to the Mg(2+) binding site. E43 serves as a coordination point for K(+). L-methionine contacts are provided by E56 and Q100. Residues 100–110 (QSPDIAQGVDE) are flexible loop. Residues 171 to 173 (DGK), 248 to 249 (KF), D257, 263 to 264 (RK), A280, and K284 contribute to the ATP site. An L-methionine-binding site is contributed by D257. K288 contacts L-methionine.

This sequence belongs to the AdoMet synthase family. In terms of assembly, homotetramer; dimer of dimers. It depends on Mg(2+) as a cofactor. The cofactor is K(+).

It is found in the cytoplasm. The enzyme catalyses L-methionine + ATP + H2O = S-adenosyl-L-methionine + phosphate + diphosphate. It functions in the pathway amino-acid biosynthesis; S-adenosyl-L-methionine biosynthesis; S-adenosyl-L-methionine from L-methionine: step 1/1. Its function is as follows. Catalyzes the formation of S-adenosylmethionine (AdoMet) from methionine and ATP. The overall synthetic reaction is composed of two sequential steps, AdoMet formation and the subsequent tripolyphosphate hydrolysis which occurs prior to release of AdoMet from the enzyme. The sequence is that of S-adenosylmethionine synthase from Parasynechococcus marenigrum (strain WH8102).